The following is a 395-amino-acid chain: MAVQKEATLVRQIIRAAGGHAADVRELVAEHGPEAVTAVLVDEIVSRAPHPVNDVPVLVELAVRSGDALVPRRLAVAQGAPVRRAAPDDDGFVAMRVEYELDELVRELFGPCRERAAGTRGTTLFPYATSGTGHIDTYFLAAQQATATVLAGCTSAKPDLNELTSRYLTPKWGSLHWFTPHYDRHFREYRNEEVRVLEIGIGGYQHPEWGGGSLRMWKHFFHRGLIYGLDIEDKSHAEEQRITTVVGDQNDPGCLTELAARYGPFDIVIDDGSHINEHVRTSFHALFPHVRPGGLYVIEDLWTAYWPGFGGDSDPGKSDLTSLGLVKSLVDSLQHQELPEDSGRSPGYADRHVVGLHVYHNLAFIEKGVNSEGGIPGWIPRDFDALVAASSGGAA.

It carries out the reaction demethylmacrocin + S-adenosyl-L-methionine = macrocin + S-adenosyl-L-homocysteine + H(+). It participates in antibiotic biosynthesis; tylosin biosynthesis. O-methyltransferase that catalyzes the conversion of demethylmacrocin to macrocin, the penultimate step of tylosin antibiotic biosynthesis. Also able to mediate the conversion of demethyllactenocin to lactenocin. The polypeptide is Demethylmacrocin O-methyltransferase (tylE) (Streptomyces fradiae (Streptomyces roseoflavus)).